A 308-amino-acid chain; its full sequence is Maspardin (308 aa).

Positions Phe-87 to Met-159 constitute an AB hydrolase-1 domain. Ser-304 carries the phosphoserine modification.

The protein belongs to the AB hydrolase superfamily. In terms of assembly, interacts with CD4. Interacts with ALDH16A1. Expressed in all tissues tested, including heart, brain, placenta, lung, liver, skeletal muscle, kidney and pancreas. Expressed in J.CaM1.6, HuT 78 and HeLa cell lines (at protein level).

It localises to the cytoplasm. The protein localises to the cytosol. It is found in the membrane. Its subcellular location is the endosome membrane. The protein resides in the golgi apparatus. It localises to the trans-Golgi network membrane. Its function is as follows. May play a role as a negative regulatory factor in CD4-dependent T-cell activation. The sequence is that of Maspardin (SPG21) from Homo sapiens (Human).